The chain runs to 77 residues: Small ribosomal subunit protein bS20 (77 aa).

This sequence belongs to the bacterial ribosomal protein bS20 family.

In terms of biological role, binds directly to 16S ribosomal RNA. This Lactococcus lactis subsp. lactis (strain IL1403) (Streptococcus lactis) protein is Small ribosomal subunit protein bS20.